The primary structure comprises 817 residues: MASIAHLIFSGLLAATVANSQQYEGSSRNEDAFNYVQPRNTTIFGQYGHSPAVLPSPNSTGLGEWHAAYAKAREFVSLLTLEEKADMVTGQPGPCVGNIVAIPRLGFNGLCLQDGPMAIRVADYASVFSAGVTAASTWDRDILYERAFAMGQEFRAKGAHIALSPVAGPLGRSAYGGRNWEGFAADPYLTGIAMELSVQGYHDAGVQATPKHFIGNEQETQRNPTFDPNGTVTDVLQEALSSNIDDRTMHELYLWPFANAAHAKAASFMCSYQRLNGSYACQNSKVLNGLLKEELGFQGYVMSDWGGTHSGVASIEAGLDMNMPGGLGPYGTIPEAGSFFGGNVTQAVKNGTVDEARVDDMIVRIMTPYYWLGQDQDFPSVDPSSADLNTFSPRSTWLREFNLTGERSRDVRGDHAKLIRRHGAEATILLKNENNALPLKSPKALAIFGNDAGEPTMGAVNKANFEFGTLAAGGGSGTGRFTYVVSSLEAIKSRAKRANTLVQYWLNNTEVATTDVTTLWVPTPPDACLVFLKTWAEEGEDREHLSVDYDGNNVVFSVARKCNNTIVITHSSGINELPFADHPNVTAILAAHYPGQESGNSIVDVLYGDVNPSGRLPYTIARNGSDYNAPPTTEIATTGKEDWQAWFDEKLEIDYRYFDAHNISVLYEFGFGLSYTTFNLSDINAEPLVKSISSVPEQLPIQPGGNPALWENVYNVSVVVTNSGDVKGKAVPQLYVTFPDNTPAGTPPKQLRGFDKVPLKPGESRAVSFQLMRRDLSYWDVVSQQWLIPEGEFVIRVGFSSRDLREMIRITPVTDST.

An N-terminal signal peptide occupies residues 1 to 20 (MASIAHLIFSGLLAATVANS). N-linked (GlcNAc...) asparagine glycosylation is found at Asn40, Asn58, Asn229, and Asn276. Asp304 is a catalytic residue. Residues Asn343, Asn350, Asn402, Asn507, Asn563, Asn584, Asn623, Asn662, Asn679, and Asn715 are each glycosylated (N-linked (GlcNAc...) asparagine).

The protein belongs to the glycosyl hydrolase 3 family.

The protein resides in the secreted. The catalysed reaction is Hydrolysis of terminal, non-reducing beta-D-glucosyl residues with release of beta-D-glucose.. It functions in the pathway glycan metabolism; cellulose degradation. Its function is as follows. Beta-glucosidases are one of a number of cellulolytic enzymes involved in the degradation of cellulosic biomass. Catalyzes the last step releasing glucose from the inhibitory cellobiose. This chain is Probable beta-glucosidase G (bglG), found in Neosartorya fischeri (strain ATCC 1020 / DSM 3700 / CBS 544.65 / FGSC A1164 / JCM 1740 / NRRL 181 / WB 181) (Aspergillus fischerianus).